A 632-amino-acid polypeptide reads, in one-letter code: Extracellular metalloproteinase 2 (632 aa).

Positions 1–19 (MHGLLLAGLAAALPLGVAG) are cleaved as a signal peptide. A propeptide spanning residues 20–244 (LPARQQSGLS…VHNVVDYVAS (225 aa)) is cleaved from the precursor. N-linked (GlcNAc...) asparagine glycosylation occurs at asparagine 270. Residue histidine 429 participates in Zn(2+) binding. The active site involves glutamate 430. A Zn(2+)-binding site is contributed by histidine 433.

This sequence belongs to the peptidase M36 family. It depends on Zn(2+) as a cofactor.

It localises to the secreted. Secreted metalloproteinase probably acting as a virulence factor. The chain is Extracellular metalloproteinase 2 (MEP2) from Arthroderma benhamiae (Trichophyton mentagrophytes).